The sequence spans 348 residues: Anthranilate phosphoribosyltransferase (348 aa).

5-phospho-alpha-D-ribose 1-diphosphate-binding positions include G93, 96-97, T101, 103-106, 121-129, and S133; these read GD, NVST, and KHGNRAVSS. An anthranilate-binding site is contributed by G93. Residue S105 coordinates Mg(2+). N124 lines the anthranilate pocket. An anthranilate-binding site is contributed by R179. Residues D238 and E239 each contribute to the Mg(2+) site.

The protein belongs to the anthranilate phosphoribosyltransferase family. In terms of assembly, homodimer. Requires Mg(2+) as cofactor.

The enzyme catalyses N-(5-phospho-beta-D-ribosyl)anthranilate + diphosphate = 5-phospho-alpha-D-ribose 1-diphosphate + anthranilate. Its pathway is amino-acid biosynthesis; L-tryptophan biosynthesis; L-tryptophan from chorismate: step 2/5. In terms of biological role, catalyzes the transfer of the phosphoribosyl group of 5-phosphorylribose-1-pyrophosphate (PRPP) to anthranilate to yield N-(5'-phosphoribosyl)-anthranilate (PRA). In Desulfotalea psychrophila (strain LSv54 / DSM 12343), this protein is Anthranilate phosphoribosyltransferase.